The primary structure comprises 438 residues: Coenzyme A disulfide reductase (438 aa).

8-33 serves as a coordination point for FAD; the sequence is GAVAGGATCASQIRRLDKESDIIIFE. Residues Thr15, Gln19, Arg22, Ser39, and Asn42 each coordinate substrate. The Nucleophile role is filled by Cys43. The active-site Redox-active is Cys43. A substrate-binding site is contributed by Lys71. 151-166 lines the NADP(+) pocket; it reads VLVVGAGYVSLEVLEN. 267–277 provides a ligand contact to FAD; sequence TNVPNIYAIGD. A substrate-binding site is contributed by His299. Tyr419 is a binding site for FAD. A substrate-binding site is contributed by Lys427.

Belongs to the class-III pyridine nucleotide-disulfide oxidoreductase family. As to quaternary structure, homodimer. Requires FAD as cofactor.

It catalyses the reaction NADP(+) + 2 CoA = CoA-disulfide + NADPH + H(+). Its function is as follows. Catalyzes specifically the NADPH-dependent reduction of coenzyme A disulfide. Is also active with other disulfide substrates containing at least one 4'-phosphopantethienyl moiety such as 4,4'-diphosphopantethine, but is not able to reduce oxidized glutathione, cystine, pantethine, or H(2)O(2). This is Coenzyme A disulfide reductase (cdr) from Staphylococcus aureus (strain NCTC 8325 / PS 47).